A 240-amino-acid chain; its full sequence is uncharacterized protein (240 aa).

Residues 1–27 (MKDLQKKSSVRRQITNEDDERYGEDSI) form a disordered region. Residues S59 and S95 each carry the phosphoserine modification. A disordered region spans residues 189-227 (RTPSPTGKSVGDEATSNNMHSSSAIRNPNGPTVDPEEGK). Residues 202 to 218 (ATSNNMHSSSAIRNPNG) show a composition bias toward polar residues.

This is an uncharacterized protein from Saccharomyces cerevisiae (strain ATCC 204508 / S288c) (Baker's yeast).